The following is a 351-amino-acid chain: Fe(3+) ions import ATP-binding protein FbpC (351 aa).

Residues 9–239 (LVLKNINKTF…PNSLFLANFM (231 aa)) enclose the ABC transporter domain. Position 41–48 (41–48 (GPSGCGKT)) interacts with ATP.

This sequence belongs to the ABC transporter superfamily. Fe(3+) ion importer (TC 3.A.1.10) family. As to quaternary structure, the complex is composed of two ATP-binding proteins (FbpC), two transmembrane proteins (FbpB) and a solute-binding protein (FbpA).

It localises to the cell inner membrane. It catalyses the reaction Fe(3+)(out) + ATP + H2O = Fe(3+)(in) + ADP + phosphate + H(+). In terms of biological role, part of the ABC transporter complex FbpABC involved in Fe(3+) ions import. Responsible for energy coupling to the transport system. The protein is Fe(3+) ions import ATP-binding protein FbpC of Mannheimia succiniciproducens (strain KCTC 0769BP / MBEL55E).